Reading from the N-terminus, the 199-residue chain is Transgelin-3 (199 aa).

The 113-residue stretch at 24-136 (ADLENKLVDW…RTLMALGSVA (113 aa)) folds into the Calponin-homology (CH) domain. Position 163 is a phosphoserine (S163). The stretch at 174–199 (IGLQMGSNKGASQAGMTGYGMPRQIM) is one Calponin-like repeat. The segment covering 178–188 (MGSNKGASQAG) has biased composition (polar residues). The interval 178–199 (MGSNKGASQAGMTGYGMPRQIM) is disordered.

The protein belongs to the calponin family. As to expression, abundant and ubiquitous expression in neurons.

The protein is Transgelin-3 (Tagln3) of Rattus norvegicus (Rat).